The sequence spans 556 residues: Arginine--tRNA ligase (556 aa).

The short motif at 129 to 139 is the 'HIGH' region element; sequence ANPTGPLHVGH.

Belongs to the class-I aminoacyl-tRNA synthetase family. Monomer.

It is found in the cytoplasm. It carries out the reaction tRNA(Arg) + L-arginine + ATP = L-arginyl-tRNA(Arg) + AMP + diphosphate. The protein is Arginine--tRNA ligase of Desulfosudis oleivorans (strain DSM 6200 / JCM 39069 / Hxd3) (Desulfococcus oleovorans).